A 425-amino-acid polypeptide reads, in one-letter code: Histone-binding protein RBBP4 (425 aa).

Position 2 is an N-acetylalanine (alanine 2). WD repeat units follow at residues 32-125, 126-175, 176-223, 225-270, 271-314, 315-371, and 372-404; these read YDLV…NHEG, EVNR…RLRG, HQKE…KTIF, GHTA…HSVD, AHTA…HSFE, SHKD…FIHG, and GHTA…VWQM.

The protein belongs to the WD repeat RBAP46/RBAP48/MSI1 family. In terms of assembly, binds directly to histone H4, probably via helix 1 of the histone fold, a region that is not accessible when histone H4 is in chromatin. Forms a large corepressor complex that contains ncor1, sin3a and possibly sin3b, histone deacetylases hdac2, hdac1, rbbp4 and possibly rbbp7.

Its subcellular location is the nucleus. The protein localises to the chromosome. The protein resides in the telomere. Functionally, core histone-binding subunit that may target chromatin assembly factors, chromatin remodeling factors and histone deacetylases to their histone substrates in a manner that is regulated by nucleosomal DNA. Component of several complexes which regulate chromatin metabolism. The polypeptide is Histone-binding protein RBBP4 (rbbp4) (Xenopus tropicalis (Western clawed frog)).